Here is a 442-residue protein sequence, read N- to C-terminus: 5-methylthioadenosine/S-adenosylhomocysteine deaminase (442 aa).

Positions 72 and 74 each coordinate Zn(2+). E101 and H194 together coordinate substrate. H221 is a binding site for Zn(2+). Substrate is bound by residues E224 and D309. D309 lines the Zn(2+) pocket.

Belongs to the metallo-dependent hydrolases superfamily. MTA/SAH deaminase family. Zn(2+) is required as a cofactor.

It catalyses the reaction S-adenosyl-L-homocysteine + H2O + H(+) = S-inosyl-L-homocysteine + NH4(+). The enzyme catalyses S-methyl-5'-thioadenosine + H2O + H(+) = S-methyl-5'-thioinosine + NH4(+). Its function is as follows. Catalyzes the deamination of 5-methylthioadenosine and S-adenosyl-L-homocysteine into 5-methylthioinosine and S-inosyl-L-homocysteine, respectively. Is also able to deaminate adenosine. The protein is 5-methylthioadenosine/S-adenosylhomocysteine deaminase of Teredinibacter turnerae (strain ATCC 39867 / T7901).